A 293-amino-acid polypeptide reads, in one-letter code: Bifunctional protein FolD (293 aa).

NADP(+) is bound by residues 165–167 (GRG), Thr192, and Val233.

This sequence belongs to the tetrahydrofolate dehydrogenase/cyclohydrolase family. In terms of assembly, homodimer.

It carries out the reaction (6R)-5,10-methylene-5,6,7,8-tetrahydrofolate + NADP(+) = (6R)-5,10-methenyltetrahydrofolate + NADPH. The catalysed reaction is (6R)-5,10-methenyltetrahydrofolate + H2O = (6R)-10-formyltetrahydrofolate + H(+). It participates in one-carbon metabolism; tetrahydrofolate interconversion. In terms of biological role, catalyzes the oxidation of 5,10-methylenetetrahydrofolate to 5,10-methenyltetrahydrofolate and then the hydrolysis of 5,10-methenyltetrahydrofolate to 10-formyltetrahydrofolate. The protein is Bifunctional protein FolD of Streptomyces griseus subsp. griseus (strain JCM 4626 / CBS 651.72 / NBRC 13350 / KCC S-0626 / ISP 5235).